Consider the following 346-residue polypeptide: 4-hydroxy-2-oxovalerate aldolase 2 (346 aa).

Residues 8–258 form the Pyruvate carboxyltransferase domain; that stretch reads VTLVDTTLRD…HTGVELFPLI (251 aa). Substrate-binding positions include 16–17, serine 170, and histidine 197; that span reads RD. Aspartate 17 is a Mn(2+) binding site. Mn(2+)-binding residues include histidine 197 and histidine 199. Tyrosine 288 lines the substrate pocket.

It belongs to the 4-hydroxy-2-oxovalerate aldolase family.

The enzyme catalyses (S)-4-hydroxy-2-oxopentanoate = acetaldehyde + pyruvate. The chain is 4-hydroxy-2-oxovalerate aldolase 2 from Nocardia farcinica (strain IFM 10152).